A 136-amino-acid polypeptide reads, in one-letter code: Large ribosomal subunit protein bL19 (136 aa).

It belongs to the bacterial ribosomal protein bL19 family.

This protein is located at the 30S-50S ribosomal subunit interface and may play a role in the structure and function of the aminoacyl-tRNA binding site. This is Large ribosomal subunit protein bL19 from Xylella fastidiosa (strain 9a5c).